We begin with the raw amino-acid sequence, 115 residues long: MTSTLDVSKVLGLLDQVLAERKASGDPEASYVAQLHHKGLNKILEKVGEEATETILAAKDAERSGNTDLLVCETADLLFHAMVMLSHLGSNTDAVMAELARRFDLSGLEEKASRK.

Belongs to the PRA-PH family.

The protein localises to the cytoplasm. The catalysed reaction is 1-(5-phospho-beta-D-ribosyl)-ATP + H2O = 1-(5-phospho-beta-D-ribosyl)-5'-AMP + diphosphate + H(+). Its pathway is amino-acid biosynthesis; L-histidine biosynthesis; L-histidine from 5-phospho-alpha-D-ribose 1-diphosphate: step 2/9. In Saccharophagus degradans (strain 2-40 / ATCC 43961 / DSM 17024), this protein is Phosphoribosyl-ATP pyrophosphatase.